A 617-amino-acid chain; its full sequence is V-type proton ATPase catalytic subunit A (617 aa).

Residue 250 to 257 (GAFGCGKT) coordinates ATP. The residue at position 384 (Ser384) is a Phosphoserine; by AMPK.

This sequence belongs to the ATPase alpha/beta chains family. In terms of assembly, V-ATPase is a heteromultimeric enzyme made up of two complexes: the ATP-hydrolytic V1 complex and the proton translocation V0 complex. The V1 complex consists of three catalytic AB heterodimers that form a heterohexamer, three peripheral stalks each consisting of EG heterodimers, one central rotor including subunits D and F, and the regulatory subunits C and H. The proton translocation complex V0 consists of the proton transport subunit a, a ring of proteolipid subunits c9c'', rotary subunit d, subunits e and f, and the accessory subunits ATP6AP1/Ac45 and ATP6AP2/PRR. Interacts with the V0 complex V-ATPase subunit a4 ATP6V0A4. Interacts with WFS1. Interacts with alpha-crystallin B chain/CRYAB and with MTOR, forming a ternary complex. In terms of processing, phosphorylation at Ser-384 by AMPK down-regulates its enzyme activity.

Its subcellular location is the cytoplasm. The protein localises to the cytosol. It localises to the cytoplasmic vesicle. It is found in the secretory vesicle. The protein resides in the clathrin-coated vesicle membrane. Its subcellular location is the lysosome. It carries out the reaction ATP + H2O + 4 H(+)(in) = ADP + phosphate + 5 H(+)(out). With respect to regulation, ATP hydrolysis occurs at the interface between the nucleotide-binding domains of subunits A and B. ATP hydrolysis triggers a conformational change in the subunits D and F, which induces a shift of subunit d. The c-ring is subsequently rotated and results in a continuous proton translocation across the membrane. Its function is as follows. Catalytic subunit of the V1 complex of vacuolar(H+)-ATPase (V-ATPase), a multisubunit enzyme composed of a peripheral complex (V1) that hydrolyzes ATP and a membrane integral complex (V0) that translocates protons. V-ATPase is responsible for acidifying and maintaining the pH of intracellular compartments and in some cell types, is targeted to the plasma membrane, where it is responsible for acidifying the extracellular environment. In aerobic conditions, involved in intracellular iron homeostasis, thus triggering the activity of Fe(2+) prolyl hydroxylase (PHD) enzymes, and leading to HIF1A hydroxylation and subsequent proteasomal degradation. May play a role in neurite development and synaptic connectivity. In Mus musculus (Mouse), this protein is V-type proton ATPase catalytic subunit A (Atp6v1a).